A 563-amino-acid polypeptide reads, in one-letter code: Cytochrome b (563 aa).

12 consecutive transmembrane segments (helical) span residues 36 to 61, 81 to 104, 119 to 141, 193 to 220, 255 to 276, 326 to 345, 358 to 379, 387 to 409, 436 to 454, 458 to 476, 505 to 527, and 539 to 557; these read SYWLGAMVAASFAYTIITGLFLLLYY, SVLLFSHLYGSYIMILLAYIHMFR, WVTGVLLLALTLGASFFGYSLVS, RLLGWHIIMVFLLGVLFLFHFMLSERYG, LSIVLITWGIILFVPNLLANIN, ILTIALLVVGLVILMLLPFL, FWTWIMTTLAVYLVELSVWGYL, TSAQIEFLGPPLVIIGIIVYLWP, ILLGAVGTLSFAATLFNFI, TLINGIILVPLGLFAIYAL, IAFFGIIALFVVSLVLLGLMWTL, and MDLGVILLLWGVAIQLYHY. 2 residues coordinate heme: H87 and H101. Residues H198 and H212 each contribute to the heme site.

This sequence belongs to the cytochrome b family. As to quaternary structure, it is a component of at least 2 distinct terminal oxidases, the quinol oxidase (SoxABC) and the alternate quinol oxidase with the core components SoxM and a Rieske Fe-S protein.

Its subcellular location is the cell membrane. Its function is as follows. Binds 2 heme groups (b586 and b606) which are not covalently bound to the protein. In Sulfolobus acidocaldarius (strain ATCC 33909 / DSM 639 / JCM 8929 / NBRC 15157 / NCIMB 11770), this protein is Cytochrome b (soxC).